A 410-amino-acid polypeptide reads, in one-letter code: Cysteine desulfurase IscS (410 aa).

Pyridoxal 5'-phosphate is bound by residues 80-81, Asn160, Gln188, and 208-210; these read AT and SGH. The residue at position 211 (Lys211) is an N6-(pyridoxal phosphate)lysine. Thr248 provides a ligand contact to pyridoxal 5'-phosphate. Catalysis depends on Cys334, which acts as the Cysteine persulfide intermediate. [2Fe-2S] cluster is bound at residue Cys334.

This sequence belongs to the class-V pyridoxal-phosphate-dependent aminotransferase family. NifS/IscS subfamily. In terms of assembly, homodimer. Forms a heterotetramer with IscU, interacts with other sulfur acceptors. It depends on pyridoxal 5'-phosphate as a cofactor.

It is found in the cytoplasm. It catalyses the reaction (sulfur carrier)-H + L-cysteine = (sulfur carrier)-SH + L-alanine. It functions in the pathway cofactor biosynthesis; iron-sulfur cluster biosynthesis. In terms of biological role, master enzyme that delivers sulfur to a number of partners involved in Fe-S cluster assembly, tRNA modification or cofactor biosynthesis. Catalyzes the removal of elemental sulfur atoms from cysteine to produce alanine. Functions as a sulfur delivery protein for Fe-S cluster synthesis onto IscU, an Fe-S scaffold assembly protein, as well as other S acceptor proteins. The polypeptide is Cysteine desulfurase IscS (Rickettsia felis (strain ATCC VR-1525 / URRWXCal2) (Rickettsia azadi)).